The following is a 38-amino-acid chain: Turripeptide GpIAa (38 aa).

Belongs to the turripeptide family. Expressed by the venom duct.

Its subcellular location is the secreted. This is Turripeptide GpIAa from Cryptogemma periscelida (Atlantic gem-turris).